We begin with the raw amino-acid sequence, 393 residues long: S-adenosylmethionine synthase 1 (393 aa).

Glutamate 9 contributes to the Mg(2+) binding site. Histidine 15 serves as a coordination point for ATP. Glutamate 43 is a binding site for K(+). L-methionine-binding residues include glutamate 56 and glutamine 99. Residues aspartate 167 to lysine 169, serine 235 to phenylalanine 238, aspartate 246, arginine 252 to lysine 253, alanine 269, lysine 273, and lysine 277 contribute to the ATP site. Residue aspartate 246 participates in L-methionine binding. Lysine 277 is an L-methionine binding site.

It belongs to the AdoMet synthase family. In terms of assembly, homotetramer. Mn(2+) is required as a cofactor. Mg(2+) serves as cofactor. It depends on Co(2+) as a cofactor. The cofactor is K(+). Requires NH4(+) as cofactor. In terms of tissue distribution, mostly expressed in roots, and, to a lower extent, in hypocotyls and cotyledons.

Its subcellular location is the cytoplasm. The enzyme catalyses L-methionine + ATP + H2O = S-adenosyl-L-methionine + phosphate + diphosphate. Its pathway is amino-acid biosynthesis; S-adenosyl-L-methionine biosynthesis; S-adenosyl-L-methionine from L-methionine: step 1/1. With respect to regulation, inhibited by products of SAMS reaction (SAM, Pi, PPi), substrate analogs (cycloleucine and ethionine), and alternative nucleotides (GTP, CTP and ADP). Strongly repressed by PPPi. Catalyzes the formation of S-adenosylmethionine from methionine and ATP. The reaction comprises two steps that are both catalyzed by the same enzyme: formation of S-adenosylmethionine (AdoMet) and triphosphate, and subsequent hydrolysis of the triphosphate. The chain is S-adenosylmethionine synthase 1 (SAMS1) from Catharanthus roseus (Madagascar periwinkle).